We begin with the raw amino-acid sequence, 373 residues long: Opsin Rh1 (373 aa).

Residues 1–54 (MDSFAAVATQLGPHFAALSNGSVVDKVTPDMAHLISPYWNQFPAMDPIWAKILT) lie on the Extracellular side of the membrane. The N-linked (GlcNAc...) asparagine glycan is linked to Asn-20. Residues 55–75 (AYMIIIGMISWCGNGVVIYIF) traverse the membrane as a helical segment. Topologically, residues 76–86 (ATTKSLRTPAN) are cytoplasmic. A helical transmembrane segment spans residues 87 to 107 (LLVINLAISDFGIMITNTPMM). Over 108-124 (GINLYFETWVLGPMMCD) the chain is Extracellular. A disulfide bond links Cys-123 and Cys-200. The chain crosses the membrane as a helical span at residues 125–145 (IYAGLGSAFGCSSIWSMCMIS). The Cytoplasmic portion of the chain corresponds to 146 to 162 (LDRYQVIVKGMAGRPMT). Residues 163-183 (IPLALGKIAYIWFMSSIWCLA) form a helical membrane-spanning segment. The Extracellular portion of the chain corresponds to 184–219 (PVFGWSRYVPEGNLTSCGIDYLERDWNPRSYLIFYS). N-linked (GlcNAc...) asparagine glycosylation is present at Asn-196. Residues 220–240 (IFVYYIPLFLICYSYWFIIAA) traverse the membrane as a helical segment. Over 241 to 276 (VSAHEKAMREQAKKMNVKSLRSSEDADKSAEGKLAK) the chain is Cytoplasmic. A helical membrane pass occupies residues 277 to 297 (VALVTISLWFMAWTPYLVINC). Residues 298 to 308 (MGLFKFEGLTP) lie on the Extracellular side of the membrane. A helical transmembrane segment spans residues 309–331 (LNTIWGACFAKSAACYNPIVYGI). Lys-319 is modified (N6-(retinylidene)lysine). The Cytoplasmic portion of the chain corresponds to 332–373 (SHPKYRLALKEKCPCCVFGKVDDGKSSEAQSQATNSEAESKA). The tract at residues 354-373 (DGKSSEAQSQATNSEAESKA) is disordered. Over residues 358–373 (SEAQSQATNSEAESKA) the composition is skewed to polar residues.

The protein belongs to the G-protein coupled receptor 1 family. Opsin subfamily. Post-translationally, phosphorylated on some or all of the serine and threonine residues present in the C-terminal region.

The protein resides in the cell projection. The protein localises to the rhabdomere membrane. Visual pigments are the light-absorbing molecules that mediate vision. They consist of an apoprotein, opsin, covalently linked to cis-retinal. The protein is Opsin Rh1 (ninaE) of Drosophila pseudoobscura pseudoobscura (Fruit fly).